The chain runs to 156 residues: Small ribosomal subunit protein uS10m (156 aa).

The protein belongs to the universal ribosomal protein uS10 family.

It is found in the mitochondrion. In terms of biological role, ribosomal protein required for normal mitochondrial function and normal larval development. Thought to have a role in insulin/IGF signaling. The chain is Small ribosomal subunit protein uS10m (mrps-10) from Caenorhabditis elegans.